We begin with the raw amino-acid sequence, 259 residues long: 3-deoxy-manno-octulosonate cytidylyltransferase (259 aa).

This sequence belongs to the KdsB family.

The protein resides in the cytoplasm. It carries out the reaction 3-deoxy-alpha-D-manno-oct-2-ulosonate + CTP = CMP-3-deoxy-beta-D-manno-octulosonate + diphosphate. Its pathway is nucleotide-sugar biosynthesis; CMP-3-deoxy-D-manno-octulosonate biosynthesis; CMP-3-deoxy-D-manno-octulosonate from 3-deoxy-D-manno-octulosonate and CTP: step 1/1. The protein operates within bacterial outer membrane biogenesis; lipopolysaccharide biosynthesis. Its function is as follows. Activates KDO (a required 8-carbon sugar) for incorporation into bacterial lipopolysaccharide in Gram-negative bacteria. The sequence is that of 3-deoxy-manno-octulosonate cytidylyltransferase from Protochlamydia amoebophila (strain UWE25).